A 177-amino-acid polypeptide reads, in one-letter code: Large ribosomal subunit protein uL6 (177 aa).

It belongs to the universal ribosomal protein uL6 family. As to quaternary structure, part of the 50S ribosomal subunit.

Its function is as follows. This protein binds to the 23S rRNA, and is important in its secondary structure. It is located near the subunit interface in the base of the L7/L12 stalk, and near the tRNA binding site of the peptidyltransferase center. This is Large ribosomal subunit protein uL6 from Salmonella dublin (strain CT_02021853).